A 241-amino-acid polypeptide reads, in one-letter code: Carboxy-S-adenosyl-L-methionine synthase (241 aa).

S-adenosyl-L-methionine contacts are provided by residues Y38, 63–65 (GCS), 88–89 (DN), 116–117 (DI), N131, and R198.

This sequence belongs to the class I-like SAM-binding methyltransferase superfamily. Cx-SAM synthase family. Homodimer.

The catalysed reaction is prephenate + S-adenosyl-L-methionine = carboxy-S-adenosyl-L-methionine + 3-phenylpyruvate + H2O. Functionally, catalyzes the conversion of S-adenosyl-L-methionine (SAM) to carboxy-S-adenosyl-L-methionine (Cx-SAM). The sequence is that of Carboxy-S-adenosyl-L-methionine synthase from Haemophilus influenzae (strain 86-028NP).